Consider the following 187-residue polypeptide: Large ribosomal subunit protein uL5 (187 aa).

This sequence belongs to the universal ribosomal protein uL5 family. Part of the 50S ribosomal subunit; part of the 5S rRNA/L5/L18/L25 subcomplex. Contacts the 5S rRNA and the P site tRNA. Forms a bridge to the 30S subunit in the 70S ribosome.

Functionally, this is one of the proteins that bind and probably mediate the attachment of the 5S RNA into the large ribosomal subunit, where it forms part of the central protuberance. In the 70S ribosome it contacts protein S13 of the 30S subunit (bridge B1b), connecting the 2 subunits; this bridge is implicated in subunit movement. Contacts the P site tRNA; the 5S rRNA and some of its associated proteins might help stabilize positioning of ribosome-bound tRNAs. The polypeptide is Large ribosomal subunit protein uL5 (Malacoplasma penetrans (strain HF-2) (Mycoplasma penetrans)).